A 99-amino-acid polypeptide reads, in one-letter code: Nucleoid-associated protein EbfC (99 aa).

Belongs to the YbaB/EbfC family. As to quaternary structure, homodimer.

It localises to the cytoplasm. It is found in the nucleoid. Its function is as follows. Binds to DNA and alters its conformation. May be involved in regulation of gene expression, nucleoid organization and DNA protection. The polypeptide is Nucleoid-associated protein EbfC (Borrelia duttonii (strain Ly)).